The following is a 289-amino-acid chain: Ribosomal RNA small subunit methyltransferase A (289 aa).

The S-adenosyl-L-methionine site is built by H27, L29, G54, E76, D102, and N123.

The protein belongs to the class I-like SAM-binding methyltransferase superfamily. rRNA adenine N(6)-methyltransferase family. RsmA subfamily.

The protein resides in the cytoplasm. The enzyme catalyses adenosine(1518)/adenosine(1519) in 16S rRNA + 4 S-adenosyl-L-methionine = N(6)-dimethyladenosine(1518)/N(6)-dimethyladenosine(1519) in 16S rRNA + 4 S-adenosyl-L-homocysteine + 4 H(+). Functionally, specifically dimethylates two adjacent adenosines (A1518 and A1519) in the loop of a conserved hairpin near the 3'-end of 16S rRNA in the 30S particle. May play a critical role in biogenesis of 30S subunits. The sequence is that of Ribosomal RNA small subunit methyltransferase A from Maricaulis maris (strain MCS10) (Caulobacter maris).